Here is a 1472-residue protein sequence, read N- to C-terminus: Adhesion G protein-coupled receptor L1 (1472 aa).

Residues 1-24 (MARLAAVLWSLCVTAILVTSATQG) form the signal peptide. Over 25-857 (LSRAGLPFGL…EIYQGRINEL (833 aa)) the chain is Extracellular. The SUEL-type lectin domain maps to 40-129 (ACEGYPIELR…KYLEVQYDCV (90 aa)). Cystine bridges form between Cys41-Cys71, Cys50-Cys128, Cys83-Cys115, Cys96-Cys102, and Cys140-Cys322. Glu42 provides a ligand contact to alpha-L-rhamnose. A glycan (N-linked (GlcNAc...) asparagine) is linked at Asn98. An alpha-L-rhamnose-binding site is contributed by 117 to 120 (GTYK). Residues 139–398 (VCPGTLQKVL…VVRYSLEFGP (260 aa)) enclose the Olfactomedin-like domain. Positions 400–468 (DPSAGPATSP…APAPSTRRPP (69 aa)) are disordered. The segment covering 405–441 (PATSPPLSTTTTARPTPLTSTASPAATTPLRRAPLTT) has biased composition (low complexity). Over residues 453-468 (DLPPATAPAPSTRRPP) the composition is skewed to pro residues. 2 disulfides stabilise this stretch: Cys480–Cys515 and Cys503–Cys532. 6 N-linked (GlcNAc...) asparagine glycosylation sites follow: Asn531, Asn640, Asn741, Asn800, Asn805, and Asn826. Positions 669 to 850 (PARFLAAKQN…AVLMAHREIY (182 aa)) constitute a GAIN-B domain. 2 disulfides stabilise this stretch: Cys801–Cys832 and Cys820–Cys834. Residues 801 to 850 (CSFWNYSERSMLGYWSTQGCRLVESNKTHTTCACSHLTNFAVLMAHREIY) are GPS. Residues 858–878 (LLSVITWVGIVISLVCLAICI) traverse the membrane as a helical segment. Over 879-892 (STFCFLRGLQTDRN) the chain is Cytoplasmic. Residues 893–913 (TIHKNLCINLFLAELLFLVGI) form a helical membrane-spanning segment. Topologically, residues 914–919 (DKTQYE) are extracellular. A helical membrane pass occupies residues 920–940 (IACPIFAGLLHYFFLAAFSWL). Over 941–963 (CLEGVHLYLLLVEVFESEYSRTK) the chain is Cytoplasmic. A helical membrane pass occupies residues 964–984 (YYYLGGYCFPALVVGIAAAID). Over 985–1001 (YRSYGTEKACWLRVDNY) the chain is Extracellular. A helical membrane pass occupies residues 1002–1022 (FIWSFIGPVSFVIVVNLVFLM). The Cytoplasmic portion of the chain corresponds to 1023–1049 (VTLHKMVRSSSVLKPDSSRLDNIKSWA). A helical membrane pass occupies residues 1050–1070 (LGAIALLFLLGLTWAFGLLFI). At 1071–1074 (NKES) the chain is on the extracellular side. A helical membrane pass occupies residues 1075–1095 (VVMAYLFTTFNAFQGVFIFVF). Residues 1096–1472 (HCALQKKVHK…DGQMQLVTSL (377 aa)) lie on the Cytoplasmic side of the membrane. Arg1193 carries the post-translational modification Omega-N-methylarginine. Ser1219 carries the post-translational modification Phosphoserine. Disordered stretches follow at residues 1247–1271 (FNNSYSLRSGDFPPGDGAPEPPRGR), 1291–1325 (NLRGGSSGAKGPPPPEPPVPPVPGGSGEEEAGGPG), 1358–1427 (ESES…SRPP), and 1449–1472 (YLAAPGLEGPGPDGDGQMQLVTSL). 2 stretches are compositionally biased toward pro residues: residues 1301 to 1313 (GPPPPEPPVPPVP) and 1406 to 1418 (ALPPPPPAPPGPP). Ser1471 carries the phosphoserine modification.

This sequence belongs to the G-protein coupled receptor 2 family. Adhesion G-protein coupled receptor (ADGR) subfamily. As to quaternary structure, forms a heterodimer, consisting of a large extracellular region (p120) non-covalently linked to a seven-transmembrane moiety (p85). Interacts with syntaxin and with proteins of the SHANK family via the PDZ domain. Interacts (via extracellular domain) with FLRT1, FLRT2 and FLRT3 (via extracellular domain). Autoproteolytically cleaved into 2 subunits, an extracellular subunit and a seven-transmembrane subunit. This proteolytic processing takes place early in the biosynthetic pathway, either in the endoplasmic reticulum or in the early compartment of the Golgi apparatus. As to expression, brain-specific expression but low levels are also detected in kidney, lung and spleen.

The protein resides in the cell membrane. It localises to the cell projection. Its subcellular location is the axon. It is found in the growth cone. The protein localises to the synapse. The protein resides in the presynaptic cell membrane. It localises to the synaptosome. Its function is as follows. Calcium-independent receptor of high affinity for alpha-latrotoxin, an excitatory neurotoxin present in black widow spider venom which triggers massive exocytosis from neurons and neuroendocrine cells. Receptor for TENM2 that mediates heterophilic synaptic cell-cell contact and postsynaptic specialization. Receptor probably implicated in the regulation of exocytosis. This chain is Adhesion G protein-coupled receptor L1, found in Bos taurus (Bovine).